Here is a 40-residue protein sequence, read N- to C-terminus: Photosystem II reaction center protein J (40 aa).

The chain crosses the membrane as a helical span at residues 8-28; the sequence is IPLWLIGTVTGILVIGLLGIF.

It belongs to the PsbJ family. PSII is composed of 1 copy each of membrane proteins PsbA, PsbB, PsbC, PsbD, PsbE, PsbF, PsbH, PsbI, PsbJ, PsbK, PsbL, PsbM, PsbT, PsbX, PsbY, PsbZ, Psb30/Ycf12, at least 3 peripheral proteins of the oxygen-evolving complex and a large number of cofactors. It forms dimeric complexes.

It is found in the plastid. It localises to the chloroplast thylakoid membrane. Functionally, one of the components of the core complex of photosystem II (PSII). PSII is a light-driven water:plastoquinone oxidoreductase that uses light energy to abstract electrons from H(2)O, generating O(2) and a proton gradient subsequently used for ATP formation. It consists of a core antenna complex that captures photons, and an electron transfer chain that converts photonic excitation into a charge separation. This Angiopteris evecta (Mule's foot fern) protein is Photosystem II reaction center protein J.